A 241-amino-acid chain; its full sequence is MDNETSTPDIFQWCVSPFSKITLKRSMEQRDIVEFRIDATILRQIFHHGFPDLSFNLMVITTDRKVFLLERTESFHYPRVVERIKRGQECTKLVETLYQAERDAVRRLTAEADIVPLAAVKQDDDRPESIYIFPGGHCNGNEPVLSTLLREFREETTIPLKTTELRFHATKVYGIWIHDFAVGKTFKNFVFPVKINLSSAAIRDRFRETRHTRNPTFVDIGKSHRQSLLDLVIKVQKIMIL.

A Nudix hydrolase domain is found at 50-241; that stretch reads FPDLSFNLMV…VIKVQKIMIL (192 aa). The Nudix box signature appears at 136–157; that stretch reads GHCNGNEPVLSTLLREFREETT. Mg(2+)-binding residues include Glu-151, Glu-155, and Asp-204.

The protein belongs to the Nudix hydrolase family.

In Aedes vexans (Inland floodwater mosquito), this protein is Putative hydrolase 080R.